Reading from the N-terminus, the 439-residue chain is C4-dicarboxylate transport protein (439 aa).

9 helical membrane-spanning segments follow: residues 9–29, 45–65, 80–100, 150–170, 186–206, 221–241, 291–311, 334–354, and 357–377; these read HLYFQVLTAISIGVAVGYYMP, MIKMIITPIIFCTVVTGIAGM, LYFEAVSTLALAIGLMVINVI, GEILQVLFFAILFGLALSAMG, AFFGVVNIIMKFAPIGAFGAM, LGMLMGSFYLTCLLFIFVVLG, VVGLVIPTGYSFNLDGTSIYL, ILGVLMLTSKGAAGVTGSGFV, and AATFAAIPTIPVAGLALILGI.

Belongs to the dicarboxylate/amino acid:cation symporter (DAACS) (TC 2.A.23) family.

It localises to the cell inner membrane. Functionally, responsible for the transport of dicarboxylates such as succinate, fumarate, and malate from the periplasm across the membrane. The protein is C4-dicarboxylate transport protein of Citrifermentans bemidjiense (strain ATCC BAA-1014 / DSM 16622 / JCM 12645 / Bem) (Geobacter bemidjiensis).